A 445-amino-acid chain; its full sequence is MSHSDQTSPLEARKSAALSGTARVPGDKSISHRALILGALAVGETRISGLLEGQDVIDTGKAMRALGARVERTGEFAWTVRGVGVAGFAQPEAPLDFGNSGTGCRLAMGAVAGSPITATFDGDASLRSRPMRRIVDPLEQMGARVIQSHEGGRLPLTLQGARDPLPITYRTPVPSAQIKSAVLLAGLSAPGVTTVIEAEASRDHTELMLQHFGATLVTEPEGAHGRKISLTGQPELRGARVVVPADPSSAAFPMVAALLVPGSDIVLTEVMTNPLRTGLITTLREMGGAIEESETRDDTGEPMAQFRIRGSRLRGVEVPPERAPSMIDEYLVLAVAAAFAEGTTVMRGLHELRVKESDRLEATADMLRVNGVKVEIVGDDLIVEGKGHVPGGGLVATHMDHRIAMSALVMGLAADRPVKVDDTAFIATSFPDFVPMMRRLGGELA.

A disordered region spans residues 1–25 (MSHSDQTSPLEARKSAALSGTARVP). Positions 28, 29, and 33 each coordinate 3-phosphoshikimate. Lys28 contributes to the phosphoenolpyruvate binding site. Phosphoenolpyruvate-binding residues include Gly101 and Arg129. Ser175, Gln177, Asp328, and Lys355 together coordinate 3-phosphoshikimate. A phosphoenolpyruvate-binding site is contributed by Gln177. Catalysis depends on Asp328, which acts as the Proton acceptor. The phosphoenolpyruvate site is built by Arg359 and Arg402.

The protein belongs to the EPSP synthase family. In terms of assembly, monomer.

The protein resides in the cytoplasm. It carries out the reaction 3-phosphoshikimate + phosphoenolpyruvate = 5-O-(1-carboxyvinyl)-3-phosphoshikimate + phosphate. Its pathway is metabolic intermediate biosynthesis; chorismate biosynthesis; chorismate from D-erythrose 4-phosphate and phosphoenolpyruvate: step 6/7. Its function is as follows. Catalyzes the transfer of the enolpyruvyl moiety of phosphoenolpyruvate (PEP) to the 5-hydroxyl of shikimate-3-phosphate (S3P) to produce enolpyruvyl shikimate-3-phosphate and inorganic phosphate. This chain is 3-phosphoshikimate 1-carboxyvinyltransferase, found in Rhodopseudomonas palustris (strain BisB5).